Here is a 141-residue protein sequence, read N- to C-terminus: Galactose-6-phosphate isomerase subunit LacA (141 aa).

This sequence belongs to the LacAB/RpiB family. In terms of assembly, heteromultimeric protein consisting of LacA and LacB.

It carries out the reaction aldehydo-D-galactose 6-phosphate = keto-D-tagatose 6-phosphate. Its pathway is carbohydrate metabolism; D-galactose 6-phosphate degradation; D-tagatose 6-phosphate from D-galactose 6-phosphate: step 1/1. The protein is Galactose-6-phosphate isomerase subunit LacA of Streptococcus pneumoniae (strain P1031).